We begin with the raw amino-acid sequence, 106 residues long: uncharacterized protein (106 aa).

A disordered region spans residues 28 to 68 (SSANEPKKLPNKKLVSTKSHTQVNREKSKNKDTYEDYSDSN). A compositionally biased stretch (basic and acidic residues) spans 50–61 (VNREKSKNKDTY).

This is an uncharacterized protein from Acanthamoeba polyphaga (Amoeba).